The primary structure comprises 2021 residues: Fanconi anemia group M protein homolog (2021 aa).

S30 is modified (phosphoserine). The Helicase ATP-binding domain maps to 86 to 254 (ISRSALFCNT…QVITNLLIGK (169 aa)). ATP is bound at residue 99-106 (LPTGLGKT). Positions 202–205 (DEAH) match the DEAH box motif. The Helicase C-terminal domain maps to 437 to 612 (KLEEVILEHF…VLRLYQGSPR (176 aa)). Disordered regions lie at residues 638–657 (RSVQ…SKSN), 837–886 (PCRA…RMAD), 1002–1049 (CSPY…LPGT), 1244–1273 (GAAD…AISP), 1296–1319 (ASSS…SSKT), 1369–1441 (PRRT…RTCP), 1447–1466 (KGRN…RSQV), 1615–1700 (NKKQ…QPSI), and 1712–1732 (AQSH…ESRK). A compositionally biased stretch (polar residues) spans 1018–1035 (ASHSAGNSQQNLESNSAK). Basic and acidic residues predominate over residues 1249 to 1259 (SGRHSDKEIKD). A compositionally biased stretch (basic and acidic residues) spans 1370–1379 (RRTEVEHLTS). The segment covering 1388 to 1397 (RKTKKPKRNV) has biased composition (basic residues). S1637 bears the Phosphoserine mark. The segment covering 1669 to 1682 (SGPSGSSVPPQVLS) has biased composition (low complexity). Over residues 1684-1700 (PSWNQSSRQRLQVQPSI) the composition is skewed to polar residues. The tract at residues 1689-2009 (SSRQRLQVQP…LNQERQKPDT (321 aa)) is interaction with FAAP24.

The protein belongs to the DEAD box helicase family. DEAH subfamily. FANCM sub-subfamily. In terms of assembly, component of the Fanconi anemia (FA) core complex, which consists of CENPS, CENPX, FANCA, FANCB, FANCC, FANCE, FANCF, FANCG, FANCL, FANCM, FAAP24 and FAAP100. The FA core complex associates with Bloom syndrome (BLM) complex, which consists of at least BLM, DNA topoisomerase 3-alpha/TOP3A, RMI1/BLAP75, RPA1/RPA70 and RPA2/RPA32. This supercomplex between FA and BLM complexes has been called BRAFT. Forms a discrete complex with CENPS and CENPX, called FANCM-MHF; this interaction stimulates DNA binding and replication fork remodeling by FANCM and stabilizes the binding partners. Forms a heterodimer with FAAP24; this interaction increases FANCM single-stranded DNA-binding activity. In terms of processing, phosphorylated; hyperphosphorylated in response to genotoxic stress.

The protein localises to the nucleus. It carries out the reaction ATP + H2O = ADP + phosphate + H(+). Its function is as follows. DNA-dependent ATPase component of the Fanconi anemia (FA) core complex. Required for the normal activation of the FA pathway, leading to monoubiquitination of the FANCI-FANCD2 complex in response to DNA damage, cellular resistance to DNA cross-linking drugs, and prevention of chromosomal breakage. In complex with CENPS and CENPX, binds double-stranded DNA (dsDNA), fork-structured DNA (fsDNA) and Holliday junction substrates. Its ATP-dependent DNA branch migration activity can process branched DNA structures such as a movable replication fork. This activity is strongly stimulated in the presence of CENPS and CENPX. In complex with FAAP24, efficiently binds to single-strand DNA (ssDNA), splayed-arm DNA, and 3'-flap substrates. In vitro, on its own, strongly binds ssDNA oligomers and weakly fsDNA, but does not bind to dsDNA. The chain is Fanconi anemia group M protein homolog (Fancm) from Mus musculus (Mouse).